The sequence spans 28 residues: Ranatuerin-2B (28 aa).

A disulfide bridge connects residues Cys23 and Cys28.

As to expression, expressed by the skin glands.

The protein localises to the secreted. Its function is as follows. Antibacterial activity against Gram-positive bacterium S.aureus and Gram-negative bacterium E.coli. Has activity against C.albicans. This is Ranatuerin-2B from Lithobates berlandieri (Rio Grande leopard frog).